A 239-amino-acid polypeptide reads, in one-letter code: Orotidine 5'-phosphate decarboxylase (239 aa).

Residues D12, K34, 61-70, T125, R188, Q197, G217, and R218 contribute to the substrate site; that span reads DLKFHDIPNT. K63 (proton donor) is an active-site residue.

This sequence belongs to the OMP decarboxylase family. Type 1 subfamily. As to quaternary structure, homodimer.

It carries out the reaction orotidine 5'-phosphate + H(+) = UMP + CO2. It participates in pyrimidine metabolism; UMP biosynthesis via de novo pathway; UMP from orotate: step 2/2. In terms of biological role, catalyzes the decarboxylation of orotidine 5'-monophosphate (OMP) to uridine 5'-monophosphate (UMP). The sequence is that of Orotidine 5'-phosphate decarboxylase from Syntrophomonas wolfei subsp. wolfei (strain DSM 2245B / Goettingen).